The primary structure comprises 247 residues: Ribosomal RNA small subunit methyltransferase G (247 aa).

Residues G84, F89, 136 to 137, and R155 contribute to the S-adenosyl-L-methionine site; that span reads AE.

It belongs to the methyltransferase superfamily. RNA methyltransferase RsmG family.

It is found in the cytoplasm. Functionally, specifically methylates the N7 position of a guanine in 16S rRNA. This chain is Ribosomal RNA small subunit methyltransferase G, found in Prochlorococcus marinus (strain MIT 9313).